Reading from the N-terminus, the 615-residue chain is Hypermethylated in cancer 2 protein (615 aa).

The region spanning 46–109 is the BTB domain; that stretch reads CDVIIMVENS…IYTGKLLPSD (64 aa). The tract at residues 144 to 167 is disordered; that stretch reads KPFGSGRAGSTGMGRPPRSQRLST. A phosphoserine mark is found at Ser-166, Ser-169, and Ser-197. Disordered stretches follow at residues 182 to 208 and 229 to 421; these read RKGA…GSNQ and GCSS…SGHA. Positions 246–250 are binding to CtBP; the sequence is GLDLS. Over residues 280–296 the composition is skewed to low complexity; the sequence is SPPAASAPPVANSASYS. Basic and acidic residues predominate over residues 336 to 356; sequence KKEWGKKEPVAGSPFERREAG. A Phosphoserine modification is found at Ser-348. Residues 379 to 388 are compositionally biased toward low complexity; that stretch reads ASGAGPSGPY. Ser-412 is subject to Phosphoserine. C2H2-type zinc fingers lie at residues 442-469, 505-532, 533-560, 561-588, and 589-615; these read YVCI…EEEL, FKCS…LTRP, FPCN…GLKP, FACD…GEKP, and YECQ…TSPS.

It belongs to the krueppel C2H2-type zinc-finger protein family. Hic subfamily. In terms of assembly, self-associates. Interacts with HIC1. Highest levels in cerebellum.

The protein localises to the nucleus. Transcriptional repressor. The protein is Hypermethylated in cancer 2 protein (HIC2) of Homo sapiens (Human).